The primary structure comprises 173 residues: MPSNQNRDNFIDKAFTVIAESIVKIMPIEEKEKKAYIYYRDGLAAQNNGDYSEALEYYKESLLLEENKIDRGETLKNMAIIFMSNGEEDLSIETYEKALVENPKQPSCLKNIGLIYEKRGRNAEQNGDLDQRDIWFDKAAEVWTKAVKLYPGGYLDIENWLKNSGRSSIDMYL.

TPR repeat units follow at residues A35–K68, G72–Q105, and G120–G153.

Belongs to the Ycf3 family.

Its subcellular location is the cellular thylakoid membrane. Functionally, essential for the assembly of the photosystem I (PSI) complex. May act as a chaperone-like factor to guide the assembly of the PSI subunits. The chain is Photosystem I assembly protein Ycf3 from Prochlorococcus marinus (strain MIT 9312).